A 1207-amino-acid chain; its full sequence is DNA-directed RNA polymerase subunit beta' (1207 aa).

Zn(2+) is bound by residues cysteine 60, cysteine 62, cysteine 75, and cysteine 78. 3 residues coordinate Mg(2+): aspartate 450, aspartate 452, and aspartate 454. Zn(2+)-binding residues include cysteine 818, cysteine 892, cysteine 899, and cysteine 902.

The protein belongs to the RNA polymerase beta' chain family. The RNAP catalytic core consists of 2 alpha, 1 beta, 1 beta' and 1 omega subunit. When a sigma factor is associated with the core the holoenzyme is formed, which can initiate transcription. Mg(2+) serves as cofactor. The cofactor is Zn(2+).

It carries out the reaction RNA(n) + a ribonucleoside 5'-triphosphate = RNA(n+1) + diphosphate. In terms of biological role, DNA-dependent RNA polymerase catalyzes the transcription of DNA into RNA using the four ribonucleoside triphosphates as substrates. The protein is DNA-directed RNA polymerase subunit beta' of Lactococcus lactis subsp. lactis (strain IL1403) (Streptococcus lactis).